The chain runs to 169 residues: Cell division inhibitor SulA (169 aa).

Residues 106–112 form a ftsZ binding region; the sequence is ALRTGNY. The interval 162–169 is lon protease binding; that stretch reads KIHSNLYH.

The protein belongs to the SulA family. Interacts with FtsZ. Is rapidly cleaved and degraded by the Lon protease once DNA damage is repaired.

Component of the SOS system and an inhibitor of cell division. Accumulation of SulA causes rapid cessation of cell division and the appearance of long, non-septate filaments. In the presence of GTP, binds a polymerization-competent form of FtsZ in a 1:1 ratio, thus inhibiting FtsZ polymerization and therefore preventing it from participating in the assembly of the Z ring. This mechanism prevents the premature segregation of damaged DNA to daughter cells during cell division. The polypeptide is Cell division inhibitor SulA (Shigella flexneri serotype 5b (strain 8401)).